The chain runs to 132 residues: MYSWYFPKDSPSTGMGHRHDWEHAIVFIDNPDVPEPKILACSVSSHAGYKKYNPCPPWVIDGTSLKVRYKHGWPLNHDLDTTGDAGTFQDLIMWDQMTEDARRALNSVHFGSANTPFNDGNFKPKLEKAWPF.

A Conserved undecapeptide motif I motif is present at residues 1–9 (MYSWYFPKD). A Hepta-peptide GHRHDWE motif II motif is present at residues 16 to 22 (GHRHDWE).

Belongs to the Necrosis inducing protein (NPP1) family.

Its subcellular location is the secreted. Secreted effector that contributes moderately to virulence during infection by P.capsici. Causes only small yellow areas at 3 days after inoculation of host C.annuum leaves; these areas expand somewhat and became necrotic at 7 days after inoculation. Leads only to chlorotic areas, without necrosis at 7 days after non-host N.benthamiana leaves infection. The sequence is that of NLP effector protein 15 from Phytophthora capsici.